The sequence spans 296 residues: Light-independent protochlorophyllide reductase iron-sulfur ATP-binding protein (296 aa).

Residues 10–15 (GIGKST) and Lys39 contribute to the ATP site. Ser14 serves as a coordination point for Mg(2+). Positions 95 and 129 each coordinate [4Fe-4S] cluster. Position 180-181 (180-181 (NR)) interacts with ATP.

Belongs to the NifH/BchL/ChlL family. In terms of assembly, homodimer. Protochlorophyllide reductase is composed of three subunits; ChlL, ChlN and ChlB. Requires [4Fe-4S] cluster as cofactor.

It localises to the plastid. Its subcellular location is the chloroplast. It catalyses the reaction chlorophyllide a + oxidized 2[4Fe-4S]-[ferredoxin] + 2 ADP + 2 phosphate = protochlorophyllide a + reduced 2[4Fe-4S]-[ferredoxin] + 2 ATP + 2 H2O. Its pathway is porphyrin-containing compound metabolism; chlorophyll biosynthesis (light-independent). Functionally, component of the dark-operative protochlorophyllide reductase (DPOR) that uses Mg-ATP and reduced ferredoxin to reduce ring D of protochlorophyllide (Pchlide) to form chlorophyllide a (Chlide). This reaction is light-independent. The L component serves as a unique electron donor to the NB-component of the complex, and binds Mg-ATP. This chain is Light-independent protochlorophyllide reductase iron-sulfur ATP-binding protein, found in Chlorokybus atmophyticus (Soil alga).